A 56-amino-acid chain; its full sequence is MAVPKRRMSRSNTRHRRAQWKASTPNLVPVTVDGVTLRVPRHLVPAYRRGLLRPEI.

Residues 1 to 19 (MAVPKRRMSRSNTRHRRAQ) show a composition bias toward basic residues. The interval 1–22 (MAVPKRRMSRSNTRHRRAQWKA) is disordered.

This sequence belongs to the bacterial ribosomal protein bL32 family.

The chain is Large ribosomal subunit protein bL32B (rpmF2) from Streptomyces coelicolor (strain ATCC BAA-471 / A3(2) / M145).